The following is a 202-amino-acid chain: Transmembrane 4 L6 family member 1 (202 aa).

Over 1 to 9 (MCSSKCTRY) the chain is Cytoplasmic. Residues 10-30 (IGHSLVVFAVLCIVANILLYF) traverse the membrane as a helical segment. Residues 31–49 (PNGETKYAYEDHLSRFVWF) lie on the Extracellular side of the membrane. The helical transmembrane segment at 50–70 (FAGIVGGGLLILLPAFVFLGL) threads the bilayer. Topologically, residues 71–93 (EGEDCCGCWSCENYGKRCTMLSS) are cytoplasmic. Residues 94 to 114 (IMAALIGIAGSGYCVIVAALG) traverse the membrane as a helical segment. Topologically, residues 115–161 (LAEGPKCGDSHGMWNYTFANTDGQYLLDPTTWSKCHEPNNIVEWNVT) are extracellular. N-linked (GlcNAc...) asparagine glycans are attached at residues Asn-129 and Asn-159. Residues 162–182 (LFSILLALGGLEFILCLIQVI) form a helical membrane-spanning segment. Residues 183 to 202 (NGVLEGMCSYCCSHQQQYDC) lie on the Cytoplasmic side of the membrane.

This sequence belongs to the L6 tetraspanin family. Present in high molecular weight complexes in tumor cells. Interacts with SDCBP2.

The protein resides in the membrane. The protein is Transmembrane 4 L6 family member 1 (TM4SF1) of Mesocricetus auratus (Golden hamster).